A 195-amino-acid polypeptide reads, in one-letter code: Interferon tau-5 (195 aa).

The first 23 residues, 1–23 (MAFVLSLLMALVLVSYGPGGSLG), serve as a signal peptide directing secretion. Intrachain disulfides connect Cys-24-Cys-122 and Cys-52-Cys-162.

Belongs to the alpha/beta interferon family. IFN-alphaII subfamily. In terms of tissue distribution, constitutively and exclusively expressed in the mononuclear cells of the extraembryonic trophectoderm.

The protein localises to the secreted. Its function is as follows. Paracrine hormone primarily responsible for maternal recognition of pregnancy. Interacts with endometrial receptors, probably type I interferon receptors, and blocks estrogen receptor expression, preventing the estrogen-induced increase in oxytocin receptor expression in the endometrium. This results in the suppression of the pulsatile endometrial release of the luteolytic hormone prostaglandin F2-alpha, hindering the regression of the corpus luteum (luteolysis) and therefore a return to ovarian cyclicity. This, and a possible direct effect of IFN-tau on prostaglandin synthesis, leads in turn to continued ovarian progesterone secretion, which stimulates the secretion by the endometrium of the nutrients required for the growth of the conceptus. In summary, displays particularly high antiviral and antiproliferative potency concurrently with particular weak cytotoxicity, high antiluteolytic activity and immunomodulatory properties. In contrast with other IFNs, IFN-tau is not virally inducible. This Ovis aries (Sheep) protein is Interferon tau-5 (IFNT5).